The sequence spans 166 residues: Small ribosomal subunit protein uS3m (166 aa).

A mitochondrion-targeting transit peptide spans 1-25 (MLRSLQHVESHINQCRRISTTSTLL).

This sequence belongs to the universal ribosomal protein uS3 family. In terms of assembly, component of the mitochondrial ribosome small subunit (28S) which comprises a 12S rRNA and about 30 distinct proteins.

It localises to the mitochondrion. This Caenorhabditis briggsae protein is Small ribosomal subunit protein uS3m (mrps-24).